Reading from the N-terminus, the 392-residue chain is Odorant receptor 9a (392 aa).

Residues 1–41 (MSDKVKGKKQEEKDQSLRVQILVYRCMGIDLWSPTMANDRP) are Cytoplasmic-facing. A helical membrane pass occupies residues 42 to 62 (WLTFVTMGPLFLFMVPMFLAA). Residues 63–74 (HEYITQVSLLSD) lie on the Extracellular side of the membrane. Residues 75-95 (TLGSTFASMLTLVKFLLFCYH) traverse the membrane as a helical segment. The Cytoplasmic portion of the chain corresponds to 96–141 (RKEFVGLIYHIRAILAKEIEVWPDAREIIEVENQSDQMLSLTYTRC). The chain crosses the membrane as a helical span at residues 142–162 (FGLAGIFAALKPFVGIILSSI). Over 163–202 (RGDEIHLELPHNGVYPYDLQVVMFYVPTYLWNVMASYSAV) the chain is Extracellular. Residues 203–223 (TMALCVDSLLFFFTYNVCAIF) form a helical membrane-spanning segment. Topologically, residues 224–268 (KIAKHRMIHLPAVGGKEELEGLVQVLLLHQKGLQIADHIADKYRP) are cytoplasmic. The chain crosses the membrane as a helical span at residues 269 to 289 (LIFLQFFLSALQICFIGFQVA). Residues 290 to 297 (DLFPNPQS) are Extracellular-facing. The helical transmembrane segment at 298 to 318 (LYFIAFVGSLLIALFIYSKCG) threads the bilayer. Over 319 to 362 (ENIKSASLDFGNGLYETNWTDFSPPTKRALLIAAMRAQRPCQMK) the chain is Cytoplasmic. A helical membrane pass occupies residues 363-383 (GYFFEASMATFSTIVRSAVSY). Residues 384 to 392 (IMMLRSFNA) lie on the Extracellular side of the membrane.

This sequence belongs to the insect chemoreceptor superfamily. Heteromeric odorant receptor channel (TC 1.A.69) family. Or1a subfamily. In terms of assembly, interacts with Orco. Complexes exist early in the endomembrane system in olfactory sensory neurons (OSNs), coupling these complexes to the conserved ciliary trafficking pathway. Expressed in olfactory sensory neurons in the antenna.

It localises to the cell membrane. Its function is as follows. Odorant receptor which mediates acceptance or avoidance behavior, depending on its substrates. The odorant receptor repertoire encodes a large collection of odor stimuli that vary widely in identity, intensity, and duration. May form a complex with Orco to form odorant-sensing units, providing sensitive and prolonged odorant signaling and calcium permeability. The chain is Odorant receptor 9a (Or9a) from Drosophila melanogaster (Fruit fly).